The primary structure comprises 332 residues: Phospho-N-acetylmuramoyl-pentapeptide-transferase (332 aa).

Helical transmembrane passes span 3–23, 52–72, 74–94, 115–135, 140–160, 172–192, 197–217, 223–243, 248–268, and 311–331; these read FALM…PRFI, MGGT…ATAF, LLTG…VVGF, LALQ…GAGG, VFGH…FWLV, IDGL…VIAF, FDIL…FVYN, IFMG…ISIA, WTLL…MLQV, and VDFF…AILY.

The protein belongs to the glycosyltransferase 4 family. MraY subfamily. Mg(2+) is required as a cofactor.

It is found in the cell membrane. It catalyses the reaction UDP-N-acetyl-alpha-D-muramoyl-L-alanyl-gamma-D-glutamyl-L-lysyl-D-alanyl-D-alanine + di-trans,octa-cis-undecaprenyl phosphate = Mur2Ac(oyl-L-Ala-gamma-D-Glu-L-Lys-D-Ala-D-Ala)-di-trans,octa-cis-undecaprenyl diphosphate + UMP. Its pathway is cell wall biogenesis; peptidoglycan biosynthesis. Catalyzes the initial step of the lipid cycle reactions in the biosynthesis of the cell wall peptidoglycan: transfers peptidoglycan precursor phospho-MurNAc-pentapeptide from UDP-MurNAc-pentapeptide onto the lipid carrier undecaprenyl phosphate, yielding undecaprenyl-pyrophosphoryl-MurNAc-pentapeptide, known as lipid I. This Streptococcus suis (strain 98HAH33) protein is Phospho-N-acetylmuramoyl-pentapeptide-transferase.